The chain runs to 542 residues: Glucose-6-phosphate isomerase (542 aa).

Glutamate 354 serves as the catalytic Proton donor. Residues histidine 385 and lysine 505 contribute to the active site.

It belongs to the GPI family.

It localises to the cytoplasm. It catalyses the reaction alpha-D-glucose 6-phosphate = beta-D-fructose 6-phosphate. The protein operates within carbohydrate biosynthesis; gluconeogenesis. It functions in the pathway carbohydrate degradation; glycolysis; D-glyceraldehyde 3-phosphate and glycerone phosphate from D-glucose: step 2/4. Its function is as follows. Catalyzes the reversible isomerization of glucose-6-phosphate to fructose-6-phosphate. In Nitrosospira multiformis (strain ATCC 25196 / NCIMB 11849 / C 71), this protein is Glucose-6-phosphate isomerase.